A 497-amino-acid chain; its full sequence is Signal recognition particle subunit SRP54 2 (497 aa).

Residues 1 to 297 (MVLAELGGRI…DAKPFVSRLL (297 aa)) are G-domain. GTP-binding positions include 108-117 (GLQGEVLEKP), 192-196 (DTSGR), and 250-253 (TKMD). Positions 298 to 497 (GNGDMSGFVN…LMGMFGGRDE (200 aa)) are M-domain.

This sequence belongs to the GTP-binding SRP family. SRP54 subfamily. Component of a signal recognition particle (SRP) complex that consists of a 7SL RNA molecule of 300 nucleotides and six protein subunits: SRP72, SRP68, SRP54, SRP19, SRP14 and SRP9.

It localises to the cytoplasm. The protein localises to the endoplasmic reticulum. It catalyses the reaction GTP + H2O = GDP + phosphate + H(+). Component of the signal recognition particle (SRP) complex, a ribonucleoprotein complex that mediates the cotranslational targeting of secretory and membrane proteins to the endoplasmic reticulum (ER). As part of the SRP complex, associates with the SRP receptor (SR) component SRPRA to target secretory proteins to the endoplasmic reticulum membrane. Binds to the signal sequence of presecretory proteins when they emerge from the ribosomes. Displays basal GTPase activity, and stimulates reciprocal GTPase activation of the SR subunit SRPRA. Forms a guanosine 5'-triphosphate (GTP)-dependent complex with the SR subunit SRPRA. SR compaction and GTPase mediated rearrangement of SR drive SRP-mediated cotranslational protein translocation into the ER. Requires the presence of SRP9/SRP14 and/or SRP19 to stably interact with RNA. This is Signal recognition particle subunit SRP54 2 (SRP-54B) from Arabidopsis thaliana (Mouse-ear cress).